Consider the following 742-residue polypeptide: Photosystem I P700 chlorophyll a apoprotein A2 (742 aa).

The next 8 membrane-spanning stretches (helical) occupy residues leucine 46–alanine 69, leucine 135–glutamine 158, leucine 175–isoleucine 199, isoleucine 273–tyrosine 291, leucine 336–glycine 359, serine 375–valine 401, alanine 423–histidine 445, and phenylalanine 525–isoleucine 543. Cysteine 567 and cysteine 576 together coordinate [4Fe-4S] cluster. Helical transmembrane passes span alanine 583–tryptophan 604 and leucine 651–isoleucine 673. The divinyl chlorophyll a site is built by histidine 662, methionine 670, and tyrosine 678. Position 679 (tryptophan 679) interacts with phylloquinone. A helical membrane pass occupies residues leucine 715 to alanine 735.

The protein belongs to the PsaA/PsaB family. As to quaternary structure, the PsaA/B heterodimer binds the P700 divinyl chlorophyll special pair and subsequent electron acceptors. PSI consists of a core antenna complex that captures photons, and an electron transfer chain that converts photonic excitation into a charge separation. The cyanobacterial PSI reaction center is composed of one copy each of PsaA,B,C,D,E,F,I,J,K,L,M and X, and forms trimeric complexes. PSI electron transfer chain: 5 divinyl chlorophyll a, 1 divinyl chlorophyll a', 2 phylloquinones and 3 4Fe-4S clusters. PSI core antenna: 90 divinyl chlorophyll a, 22 carotenoids, 3 phospholipids and 1 galactolipid. P700 is a divinyl chlorophyll a/divinyl chlorophyll a' dimer, A0 is one or more divinyl chlorophyll a, A1 is one or both phylloquinones and FX is a shared 4Fe-4S iron-sulfur center. is required as a cofactor.

The protein localises to the cellular thylakoid membrane. The catalysed reaction is reduced [plastocyanin] + hnu + oxidized [2Fe-2S]-[ferredoxin] = oxidized [plastocyanin] + reduced [2Fe-2S]-[ferredoxin]. Functionally, psaA and PsaB bind P700, the primary electron donor of photosystem I (PSI), as well as the electron acceptors A0, A1 and FX. PSI is a plastocyanin/cytochrome c6-ferredoxin oxidoreductase, converting photonic excitation into a charge separation, which transfers an electron from the donor P700 chlorophyll pair to the spectroscopically characterized acceptors A0, A1, FX, FA and FB in turn. Oxidized P700 is reduced on the lumenal side of the thylakoid membrane by plastocyanin or cytochrome c6. In Prochlorococcus marinus (strain MIT 9515), this protein is Photosystem I P700 chlorophyll a apoprotein A2.